We begin with the raw amino-acid sequence, 966 residues long: Replication protein 1a (966 aa).

The interval 49-381 (RNKLSVAECD…VIINGQSIMS (333 aa)) is methyltransferase. The 191-residue stretch at 71–261 (NLTHEYTAPH…HDWKNLGSFL (191 aa)) folds into the Alphavirus-like MT domain. The (+)RNA virus helicase ATP-binding domain occupies 660-815 (DKTCSCANAK…NIEYDKRDIV (156 aa)). Residues 687–951 (MVDGVAGCGK…TRHKRTFEYL (265 aa)) are ATP-dependent helicase. ATP is bound at residue 690-697 (GVAGCGKT). Positions 816-966 (SKTFRCPQDV…GGDLISFYVT (151 aa)) constitute a (+)RNA virus helicase C-terminal domain.

Belongs to the bromoviridae replication protein 1a family.

The protein localises to the host endoplasmic reticulum membrane. In terms of biological role, involved in the virus replication. Contains a helicase domain and a methyltransferase domain. The methyltransferase domain is probably involved in viral RNA capping. The protein is Replication protein 1a of Vicia faba (Broad bean).